Consider the following 368-residue polypeptide: tRNA-specific 2-thiouridylase MnmA (368 aa).

ATP-binding positions include 6-13 (ALSGGVDS) and Met32. Cys92 (nucleophile) is an active-site residue. A disulfide bridge connects residues Cys92 and Cys186. Gly116 is an ATP binding site. Positions 134–136 (KDQ) are interaction with tRNA. The Cysteine persulfide intermediate role is filled by Cys186. Residues 292-293 (RY) form an interaction with tRNA region.

Belongs to the MnmA/TRMU family.

The protein resides in the cytoplasm. The enzyme catalyses S-sulfanyl-L-cysteinyl-[protein] + uridine(34) in tRNA + AH2 + ATP = 2-thiouridine(34) in tRNA + L-cysteinyl-[protein] + A + AMP + diphosphate + H(+). Catalyzes the 2-thiolation of uridine at the wobble position (U34) of tRNA, leading to the formation of s(2)U34. The protein is tRNA-specific 2-thiouridylase MnmA of Campylobacter hominis (strain ATCC BAA-381 / DSM 21671 / CCUG 45161 / LMG 19568 / NCTC 13146 / CH001A).